The chain runs to 416 residues: Histidine--tRNA ligase (416 aa).

It belongs to the class-II aminoacyl-tRNA synthetase family.

The protein resides in the cytoplasm. It catalyses the reaction tRNA(His) + L-histidine + ATP = L-histidyl-tRNA(His) + AMP + diphosphate + H(+). This Methanococcus maripaludis (strain DSM 14266 / JCM 13030 / NBRC 101832 / S2 / LL) protein is Histidine--tRNA ligase.